Here is a 340-residue protein sequence, read N- to C-terminus: Tryptophan--tRNA ligase (340 aa).

Residues 11–13 and 19–20 each bind ATP; these read RPT and GH. A 'HIGH' region motif is present at residues 12-20; the sequence is PTGKLHLGH. Residue Asp-140 participates in L-tryptophan binding. Residues 152 to 154, Leu-194, and 202 to 206 each bind ATP; these read GND and KMSKS. Positions 202 to 206 match the 'KMSKS' region motif; the sequence is KMSKS.

The protein belongs to the class-I aminoacyl-tRNA synthetase family. Homodimer.

The protein resides in the cytoplasm. The catalysed reaction is tRNA(Trp) + L-tryptophan + ATP = L-tryptophyl-tRNA(Trp) + AMP + diphosphate + H(+). Catalyzes the attachment of tryptophan to tRNA(Trp). The sequence is that of Tryptophan--tRNA ligase from Streptococcus pyogenes serotype M1.